The sequence spans 196 residues: Putative 3-methyladenine DNA glycosylase (196 aa).

This sequence belongs to the DNA glycosylase MPG family.

In Bacillus subtilis (strain 168), this protein is Putative 3-methyladenine DNA glycosylase (yxlJ).